The sequence spans 1673 residues: NBPF family member NBPF26 (1673 aa).

EGF-like domains lie at 24-63 (HALQCRDGYEPCVNKGMCVTYHSGTGYCKCPEGFLGEYCQ), 64-102 (HRDPCEKNRCQNGGTCVAQAMLGKATCRCASGFTGEDCQ), 105-143 (TPHPCFVSRPCLNGGTCHMLSRDTYECTCQVGFTGKECQ), and 144-180 (WTDACLSHLCANGSTCTTVANQFSCKCLTGFTGQKCE). Cystine bridges form between Cys28-Cys41, Cys35-Cys51, Cys53-Cys62, Cys68-Cys79, Cys73-Cys90, Cys92-Cys101, Cys109-Cys121, Cys115-Cys131, Cys133-Cys142, Cys148-Cys159, Cys153-Cys168, Cys170-Cys179, Cys186-Cys198, Cys192-Cys207, Cys209-Cys218, Cys225-Cys236, and Cys230-Cys246. Residues 182 to 219 (DVNECDIPGHCQHGGTCLNLPGSYQCQCLQGFTGQYCD) form the EGF-like 5; calcium-binding domain. Residues 221–258 (LYVPCAHSPCVNGGTCRQTGDFTFECNCLPVPDSTSSA) enclose the EGF-like 6 domain. A coiled-coil region spans residues 337 to 381 (RQFKEEKLAEQLKQAEELRQYKVLVHSQERELTQLKEKLREGRDA). Disordered regions lie at residues 423 to 463 (KLSP…KVPE), 713 to 734 (EKVQKSSAPREMQKAEEKEVPE), and 782 to 828 (WEDA…EGYS). The segment covering 427 to 443 (ENDEDEDEDVQVEEDEK) has biased composition (acidic residues). Olduvai domains follow at residues 427 to 521 (ENDE…NILP), 698 to 790 (ENDN…HIIP), 791 to 879 (ENES…ATGP), 882 to 937 (SREL…VDMD), 938 to 1029 (EIEK…PSCP), 1032 to 1104 (SGEL…PSCP), 1107 to 1162 (SREL…LDVD), 1163 to 1255 (RIKK…RSKK), 1256 to 1348 (ERRR…PSCP), 1351 to 1423 (SREL…PSCP), 1426 to 1481 (SREL…LDVD), 1482 to 1574 (RIKK…RSKK), and 1575 to 1673 (ERRR…IFPQ). Over residues 452 to 463 (EVQKTEESKVPE) the composition is skewed to basic and acidic residues. 2 stretches are compositionally biased toward acidic residues: residues 792-801 (NESDDEEEEE) and 812-824 (ESEEEEVPQESWD). The segment at 1242-1280 (KGKGKKRRGRRSKKERRRGRKEGEEDQNPPCPRLSRELL) is disordered. Basic residues predominate over residues 1243–1261 (GKGKKRRGRRSKKERRRGR). Residues 1561–1594 (KGKGKKRRGRRSKKERRRGRKEGEEDQNPPCPRL) form a disordered region. The span at 1562–1580 (GKGKKRRGRRSKKERRRGR) shows a compositional bias: basic residues.

This sequence belongs to the NBPF family.

It is found in the cytoplasm. This Homo sapiens (Human) protein is NBPF family member NBPF26.